The following is a 161-amino-acid chain: Anthrone oxygenase tpcL (161 aa).

Asn4 carries N-linked (GlcNAc...) asparagine glycosylation. A run of 4 helical transmembrane segments spans residues 15 to 35, 56 to 74, 87 to 107, and 136 to 155; these read VITGSFLSGLMMGLSVVDIPV, IGHKMMPSLAVTTCLLYGY, LPHIIAAVTTISMVPFTWLVM, and WAQLHAVRSLFPLMGSVLGL.

The protein belongs to the anthrone oxygenase family. As to expression, specifically expressed in conidia.

Its subcellular location is the membrane. It carries out the reaction emodin anthrone + O2 = emodin + H2O + H(+). The protein operates within secondary metabolite biosynthesis. In terms of biological role, anthrone oxygenase; part of the gene cluster that mediates the biosynthesis of trypacidin, a mycotoxin with antiprotozoal activity and that plays a role in the infection process. The pathway begins with the synthesis of atrochrysone thioester by the polyketide synthase (PKS) tpcC. The atrochrysone carboxyl ACP thioesterase tpcB then breaks the thioester bond and releases the atrochrysone carboxylic acid from tpcC. The decarboxylase tpcK converts atrochrysone carboxylic acid to atrochrysone which is further reduced into emodin anthrone. The next step is performed by the emodin anthrone oxygenase tpcL that catalyzes the oxidation of emodinanthrone to emodin. Emodin O-methyltransferase encoded by tpcA catalyzes methylation of the 8-hydroxy group of emodin to form questin. Ring cleavage of questin by questin oxidase tpcI leads to desmethylsulochrin via several intermediates including questin epoxide. Another methylation step catalyzed by tpcM leads to the formation of sulochrin which is further converted to monomethylsulfochrin by tpcH. Finally, the tpcJ catalyzes the conversion of monomethylsulfochrin to trypacidin. Trypacidin is toxic for human pulmonary and bronchial epithelial cells by initiating the intracellular formation of nitric oxide (NO) and hydrogen peroxide (H(2)O(2)), thus triggering host necrotic cell death. The trypacidin pathway is also able to produce endocrocin via a distinct route from the endocrocin Enc pathway. In Aspergillus fumigatus (strain ATCC MYA-4609 / CBS 101355 / FGSC A1100 / Af293) (Neosartorya fumigata), this protein is Anthrone oxygenase tpcL.